Here is a 76-residue protein sequence, read N- to C-terminus: Omega-scoloptoxin(15)-Ssd3c (76 aa).

An N-terminal signal peptide occupies residues 1 to 23; the sequence is MEKKIIFLVVLVALLALPEFISS.

The protein belongs to the scoloptoxin-15 family. In terms of processing, contains 2 disulfide bonds. In terms of tissue distribution, expressed by the venom gland.

It is found in the secreted. Voltage-gated calcium channel inhibitor (Cav) (8.6% block at 10 nM), when tested on DRG neurons. This is Omega-scoloptoxin(15)-Ssd3c from Scolopendra dehaani (Thai centipede).